The chain runs to 233 residues: Large ribosomal subunit protein uL1 (233 aa).

It belongs to the universal ribosomal protein uL1 family. In terms of assembly, part of the 50S ribosomal subunit.

Functionally, binds directly to 23S rRNA. The L1 stalk is quite mobile in the ribosome, and is involved in E site tRNA release. Protein L1 is also a translational repressor protein, it controls the translation of the L11 operon by binding to its mRNA. This chain is Large ribosomal subunit protein uL1, found in Paracoccus denitrificans (strain Pd 1222).